A 217-amino-acid polypeptide reads, in one-letter code: Transmembrane emp24 domain-containing protein p24delta6 (217 aa).

The N-terminal stretch at 1 to 26 is a signal peptide; it reads MAISPVLFIGLIYLAGGGSLFPGVEA. Residues 27–186 lie on the Lumenal side of the membrane; it reads IWLTVPESGE…INEKTNTRVN (160 aa). Residues 36-152 form the GOLD domain; that stretch reads ERCVYEEIQA…IEGVELEIRR (117 aa). 2 N-linked (GlcNAc...) asparagine glycosylation sites follow: Asn84 and Asn116. Residues 138–160 adopt a coiled-coil conformation; it reads AKKEKIEGVELEIRRSTEYASAI. 2 positions are modified to omega-N-methylated arginine: Arg170 and Arg175. A helical transmembrane segment spans residues 187–207; the sequence is QLGLMSLGVAIVVSISQVLYL. The Cytoplasmic segment spans residues 208 to 217; sequence KRYFLKKKLI. The short motif at 210-211 is the COPII vesicle coat-binding element; sequence YF. The COPI vesicle coat-binding signature appears at 210–217; that stretch reads YFLKKKLI.

This sequence belongs to the EMP24/GP25L family. As to quaternary structure, probably oligomerizes with other members of the EMP24/GP25L family. Associates with the COPI vesicle coat (coatomer). Associates with the COPII vesicle coat (coatomer).

It localises to the endoplasmic reticulum membrane. In terms of biological role, involved in vesicular protein trafficking. Mainly functions in the early secretory pathway. Thought to act as cargo receptor at the lumenal side for incorporation of secretory cargo molecules into transport vesicles and to be involved in vesicle coat formation at the cytoplasmic side. In Arabidopsis thaliana (Mouse-ear cress), this protein is Transmembrane emp24 domain-containing protein p24delta6.